The chain runs to 359 residues: UDP-3-O-acylglucosamine N-acyltransferase (359 aa).

H256 functions as the Proton acceptor in the catalytic mechanism.

It belongs to the transferase hexapeptide repeat family. LpxD subfamily. As to quaternary structure, homotrimer.

It carries out the reaction a UDP-3-O-[(3R)-3-hydroxyacyl]-alpha-D-glucosamine + a (3R)-hydroxyacyl-[ACP] = a UDP-2-N,3-O-bis[(3R)-3-hydroxyacyl]-alpha-D-glucosamine + holo-[ACP] + H(+). It participates in bacterial outer membrane biogenesis; LPS lipid A biosynthesis. In terms of biological role, catalyzes the N-acylation of UDP-3-O-acylglucosamine using 3-hydroxyacyl-ACP as the acyl donor. Is involved in the biosynthesis of lipid A, a phosphorylated glycolipid that anchors the lipopolysaccharide to the outer membrane of the cell. The polypeptide is UDP-3-O-acylglucosamine N-acyltransferase (Rhodopseudomonas palustris (strain BisB5)).